The chain runs to 434 residues: ATP-dependent protease ATPase subunit HslU (434 aa).

ATP is bound by residues V18, 60–65 (GVGKTE), D247, E312, and R384.

It belongs to the ClpX chaperone family. HslU subfamily. A double ring-shaped homohexamer of HslV is capped on each side by a ring-shaped HslU homohexamer. The assembly of the HslU/HslV complex is dependent on binding of ATP.

Its subcellular location is the cytoplasm. In terms of biological role, ATPase subunit of a proteasome-like degradation complex; this subunit has chaperone activity. The binding of ATP and its subsequent hydrolysis by HslU are essential for unfolding of protein substrates subsequently hydrolyzed by HslV. HslU recognizes the N-terminal part of its protein substrates and unfolds these before they are guided to HslV for hydrolysis. The sequence is that of ATP-dependent protease ATPase subunit HslU from Bradyrhizobium diazoefficiens (strain JCM 10833 / BCRC 13528 / IAM 13628 / NBRC 14792 / USDA 110).